A 152-amino-acid polypeptide reads, in one-letter code: 6,7-dimethyl-8-ribityllumazine synthase (152 aa).

Residues Phe-22, 56–58 (AFE), and 79–81 (AVI) contribute to the 5-amino-6-(D-ribitylamino)uracil site. 84-85 (AT) is a binding site for (2S)-2-hydroxy-3-oxobutyl phosphate. Residue His-87 is the Proton donor of the active site. Phe-112 lines the 5-amino-6-(D-ribitylamino)uracil pocket. Position 126 (Arg-126) interacts with (2S)-2-hydroxy-3-oxobutyl phosphate.

This sequence belongs to the DMRL synthase family.

The catalysed reaction is (2S)-2-hydroxy-3-oxobutyl phosphate + 5-amino-6-(D-ribitylamino)uracil = 6,7-dimethyl-8-(1-D-ribityl)lumazine + phosphate + 2 H2O + H(+). The protein operates within cofactor biosynthesis; riboflavin biosynthesis; riboflavin from 2-hydroxy-3-oxobutyl phosphate and 5-amino-6-(D-ribitylamino)uracil: step 1/2. Functionally, catalyzes the formation of 6,7-dimethyl-8-ribityllumazine by condensation of 5-amino-6-(D-ribitylamino)uracil with 3,4-dihydroxy-2-butanone 4-phosphate. This is the penultimate step in the biosynthesis of riboflavin. The chain is 6,7-dimethyl-8-ribityllumazine synthase from Carboxydothermus hydrogenoformans (strain ATCC BAA-161 / DSM 6008 / Z-2901).